Consider the following 202-residue polypeptide: Indolepyruvate oxidoreductase subunit IorB (202 aa).

Heterodimer of the IorA and IorB subunits.

The catalysed reaction is indole-3-pyruvate + 2 oxidized [2Fe-2S]-[ferredoxin] + CoA = (indol-3-yl)acetyl-CoA + 2 reduced [2Fe-2S]-[ferredoxin] + CO2 + H(+). Functionally, catalyzes the ferredoxin-dependent oxidative decarboxylation of arylpyruvates. The polypeptide is Indolepyruvate oxidoreductase subunit IorB (iorB) (Pyrococcus horikoshii (strain ATCC 700860 / DSM 12428 / JCM 9974 / NBRC 100139 / OT-3)).